The primary structure comprises 419 residues: [Butirosin acyl-carrier protein]--L-glutamate ligase (419 aa).

Positions 144 to 345 constitute an ATP-grasp domain; it reads RRLMERNGFN…FVESRVLVFN (202 aa). Position 174–231 (174–231) interacts with ATP; it reads ISAGFSKCVLKVPYGSSGKGLKVIDNERNFRFLLNYIQNRQTNVDLLLEGWHPHRLSL. 3 residues coordinate Mg(2+): Asp-298, Glu-312, and Asn-314. The Mn(2+) site is built by Asp-298, Glu-312, and Asn-314.

Monomer. Requires Mg(2+) as cofactor. It depends on Mn(2+) as a cofactor.

The enzyme catalyses holo-[BtrI ACP] + L-glutamate + ATP = gamma-L-glutamyl-[BtrI ACP] + ADP + phosphate. The catalysed reaction is 4-aminobutanoyl-[BtrI ACP] + L-glutamate + ATP = 4-(gamma-L-glutamylamino)butanoyl-[BtrI ACP] + ADP + phosphate + H(+). It functions in the pathway antibiotic biosynthesis; butirosin biosynthesis. Functionally, ATP-dependent ligase that catalyzes 2 steps in the biosynthesis of the side chain of the aminoglycoside antibiotics in the biosynthetic pathway of butirosin. Mediates the addition of one molecule of L-glutamate to a dedicated acyl-carrier protein. Following decarboxylation of the product by BtrK, adds a second L-glutamate molecule. The polypeptide is [Butirosin acyl-carrier protein]--L-glutamate ligase (btrJ) (Niallia circulans (Bacillus circulans)).